The chain runs to 347 residues: GMP reductase (347 aa).

108–131 (ADFEKTKQILDLNPALNFVCIDVA) provides a ligand contact to NADP(+). 2 residues coordinate K(+): glycine 181 and glycine 183. Cysteine 186 functions as the Thioimidate intermediate in the catalytic mechanism. 216 to 239 (IVSDGGCTTPGDVAKAFGGGADFV) provides a ligand contact to NADP(+).

This sequence belongs to the IMPDH/GMPR family. GuaC type 1 subfamily. As to quaternary structure, homotetramer.

It carries out the reaction IMP + NH4(+) + NADP(+) = GMP + NADPH + 2 H(+). Its function is as follows. Catalyzes the irreversible NADPH-dependent deamination of GMP to IMP. It functions in the conversion of nucleobase, nucleoside and nucleotide derivatives of G to A nucleotides, and in maintaining the intracellular balance of A and G nucleotides. This Shigella flexneri serotype 5b (strain 8401) protein is GMP reductase.